The following is a 174-amino-acid chain: RNA pyrophosphohydrolase (174 aa).

In terms of domain architecture, Nudix hydrolase spans 6–149 (GFRANVGIII…KRDVYRKVMK (144 aa)). The Nudix box signature appears at 38 to 59 (GGVDDGESAEEAMYRELYEEVG).

Belongs to the Nudix hydrolase family. RppH subfamily. A divalent metal cation serves as cofactor.

Accelerates the degradation of transcripts by removing pyrophosphate from the 5'-end of triphosphorylated RNA, leading to a more labile monophosphorylated state that can stimulate subsequent ribonuclease cleavage. This is RNA pyrophosphohydrolase from Shewanella sp. (strain ANA-3).